Here is a 473-residue protein sequence, read N- to C-terminus: 3-isopropylmalate dehydratase large subunit (473 aa).

Positions 348, 408, and 411 each coordinate [4Fe-4S] cluster.

This sequence belongs to the aconitase/IPM isomerase family. LeuC type 1 subfamily. In terms of assembly, heterodimer of LeuC and LeuD. [4Fe-4S] cluster is required as a cofactor.

The enzyme catalyses (2R,3S)-3-isopropylmalate = (2S)-2-isopropylmalate. It participates in amino-acid biosynthesis; L-leucine biosynthesis; L-leucine from 3-methyl-2-oxobutanoate: step 2/4. Its function is as follows. Catalyzes the isomerization between 2-isopropylmalate and 3-isopropylmalate, via the formation of 2-isopropylmaleate. This Haloarcula marismortui (strain ATCC 43049 / DSM 3752 / JCM 8966 / VKM B-1809) (Halobacterium marismortui) protein is 3-isopropylmalate dehydratase large subunit.